A 507-amino-acid chain; its full sequence is L-amino-acid oxidase (507 aa).

The first 19 residues, 1 to 19, serve as a signal peptide directing secretion; sequence MNVLFIFSLLFLAALESCA. Cys29 and Cys192 are joined by a disulfide. FAD contacts are provided by residues 62-63, 82-83, Arg90, and 106-109; these read MA, EA, and GPMR. Arg109 is a substrate binding site. 2 N-linked (GlcNAc...) asparagine glycosylation sites follow: Asn191 and Asn213. Position 280 (Val280) interacts with FAD. A disulfide bridge connects residues Cys348 and Cys429. Residue Asn378 is glycosylated (N-linked (GlcNAc...) asparagine). Tyr389 contacts substrate. FAD-binding positions include Glu473 and 480–485; that span reads GWIDST.

It belongs to the flavin monoamine oxidase family. FIG1 subfamily. As to quaternary structure, homodimer; non-covalently linked. The cofactor is FAD. In terms of tissue distribution, expressed by the venom gland.

The protein resides in the secreted. The enzyme catalyses an L-alpha-amino acid + O2 + H2O = a 2-oxocarboxylate + H2O2 + NH4(+). It carries out the reaction L-leucine + O2 + H2O = 4-methyl-2-oxopentanoate + H2O2 + NH4(+). In terms of biological role, catalyzes an oxidative deamination of predominantly hydrophobic and aromatic L-amino acids, thus producing hydrogen peroxide that may contribute to the diverse toxic effects of this enzyme. Shows activity on L-Leu. Exhibits diverse biological activities, such as hemorrhage, hemolysis, edema, apoptosis of vascular endothelial cells or tumor cell lines, antibacterial and antiparasitic activities. This protein induces platelet aggregation by both hydrogen peroxide production and binding to platelet membrane proteins (that would enhance the sensitivity of platelets to hydrogen peroxide). Effects of snake L-amino oxidases on platelets are controversial, since they either induce aggregation or inhibit agonist-induced aggregation. These different effects are probably due to different experimental conditions. In Naja atra (Chinese cobra), this protein is L-amino-acid oxidase.